We begin with the raw amino-acid sequence, 183 residues long: Potassium-transporting ATPase KdpC subunit (183 aa).

Residues 10 to 30 traverse the membrane as a helical segment; it reads ASLLVLSLVTGVAYPLLVTGI.

This sequence belongs to the KdpC family. The system is composed of three essential subunits: KdpA, KdpB and KdpC.

Its subcellular location is the cell inner membrane. Part of the high-affinity ATP-driven potassium transport (or Kdp) system, which catalyzes the hydrolysis of ATP coupled with the electrogenic transport of potassium into the cytoplasm. This subunit acts as a catalytic chaperone that increases the ATP-binding affinity of the ATP-hydrolyzing subunit KdpB by the formation of a transient KdpB/KdpC/ATP ternary complex. In Pseudomonas aeruginosa (strain UCBPP-PA14), this protein is Potassium-transporting ATPase KdpC subunit.